The primary structure comprises 115 residues: Large ribosomal subunit protein bL20 (115 aa).

Belongs to the bacterial ribosomal protein bL20 family.

Functionally, binds directly to 23S ribosomal RNA and is necessary for the in vitro assembly process of the 50S ribosomal subunit. It is not involved in the protein synthesizing functions of that subunit. The protein is Large ribosomal subunit protein bL20 of Methylococcus capsulatus (strain ATCC 33009 / NCIMB 11132 / Bath).